Consider the following 296-residue polypeptide: Sulfate adenylyltransferase subunit 2 (296 aa).

The protein belongs to the PAPS reductase family. CysD subfamily. As to quaternary structure, heterodimer composed of CysD, the smaller subunit, and CysN.

The enzyme catalyses sulfate + ATP + H(+) = adenosine 5'-phosphosulfate + diphosphate. It functions in the pathway sulfur metabolism; hydrogen sulfide biosynthesis; sulfite from sulfate: step 1/3. Its function is as follows. With CysN forms the ATP sulfurylase (ATPS) that catalyzes the adenylation of sulfate producing adenosine 5'-phosphosulfate (APS) and diphosphate, the first enzymatic step in sulfur assimilation pathway. APS synthesis involves the formation of a high-energy phosphoric-sulfuric acid anhydride bond driven by GTP hydrolysis by CysN coupled to ATP hydrolysis by CysD. In Rhodospirillum rubrum (strain ATCC 11170 / ATH 1.1.1 / DSM 467 / LMG 4362 / NCIMB 8255 / S1), this protein is Sulfate adenylyltransferase subunit 2.